The chain runs to 126 residues: MARIAGVDIPRNKKIEIAITYIYGIGRSNGMDVLRKANVDPNRRVRDLTEEEVGRIREIIDREYRVEGDLRREVQLNIKRLMDIGCYRGLRHRRGMPVRGQRTRTNARTRRGRRGQAIGIKKKVKK.

The interval 95–126 (GMPVRGQRTRTNARTRRGRRGQAIGIKKKVKK) is disordered.

Belongs to the universal ribosomal protein uS13 family. Part of the 30S ribosomal subunit. Forms a loose heterodimer with protein S19. Forms two bridges to the 50S subunit in the 70S ribosome.

In terms of biological role, located at the top of the head of the 30S subunit, it contacts several helices of the 16S rRNA. In the 70S ribosome it contacts the 23S rRNA (bridge B1a) and protein L5 of the 50S subunit (bridge B1b), connecting the 2 subunits; these bridges are implicated in subunit movement. Contacts the tRNAs in the A and P-sites. The chain is Small ribosomal subunit protein uS13 from Chloroflexus aggregans (strain MD-66 / DSM 9485).